Here is a 198-residue protein sequence, read N- to C-terminus: Dephospho-CoA kinase (198 aa).

In terms of domain architecture, DPCK spans 3 to 198; sequence LIGLTGGIAS…VDALWAGLRG (196 aa). Residue 11–16 participates in ATP binding; it reads ASGKST.

Belongs to the CoaE family.

The protein localises to the cytoplasm. The enzyme catalyses 3'-dephospho-CoA + ATP = ADP + CoA + H(+). The protein operates within cofactor biosynthesis; coenzyme A biosynthesis; CoA from (R)-pantothenate: step 5/5. Catalyzes the phosphorylation of the 3'-hydroxyl group of dephosphocoenzyme A to form coenzyme A. In Leifsonia xyli subsp. xyli (strain CTCB07), this protein is Dephospho-CoA kinase.